The sequence spans 211 residues: Thiamine-phosphate synthase (211 aa).

Residues 36–40 (QLRDK) and Asn68 contribute to the 4-amino-2-methyl-5-(diphosphooxymethyl)pyrimidine site. 2 residues coordinate Mg(2+): Asp69 and Asp88. Ser107 is a binding site for 4-amino-2-methyl-5-(diphosphooxymethyl)pyrimidine. 133 to 135 (TKS) is a 2-[(2R,5Z)-2-carboxy-4-methylthiazol-5(2H)-ylidene]ethyl phosphate binding site. Lys136 is a binding site for 4-amino-2-methyl-5-(diphosphooxymethyl)pyrimidine. 2-[(2R,5Z)-2-carboxy-4-methylthiazol-5(2H)-ylidene]ethyl phosphate-binding positions include Gly164 and 184–185 (IS).

It belongs to the thiamine-phosphate synthase family. Mg(2+) serves as cofactor.

The enzyme catalyses 2-[(2R,5Z)-2-carboxy-4-methylthiazol-5(2H)-ylidene]ethyl phosphate + 4-amino-2-methyl-5-(diphosphooxymethyl)pyrimidine + 2 H(+) = thiamine phosphate + CO2 + diphosphate. It catalyses the reaction 2-(2-carboxy-4-methylthiazol-5-yl)ethyl phosphate + 4-amino-2-methyl-5-(diphosphooxymethyl)pyrimidine + 2 H(+) = thiamine phosphate + CO2 + diphosphate. It carries out the reaction 4-methyl-5-(2-phosphooxyethyl)-thiazole + 4-amino-2-methyl-5-(diphosphooxymethyl)pyrimidine + H(+) = thiamine phosphate + diphosphate. Its pathway is cofactor biosynthesis; thiamine diphosphate biosynthesis; thiamine phosphate from 4-amino-2-methyl-5-diphosphomethylpyrimidine and 4-methyl-5-(2-phosphoethyl)-thiazole: step 1/1. Functionally, condenses 4-methyl-5-(beta-hydroxyethyl)thiazole monophosphate (THZ-P) and 2-methyl-4-amino-5-hydroxymethyl pyrimidine pyrophosphate (HMP-PP) to form thiamine monophosphate (TMP). This is Thiamine-phosphate synthase from Halalkalibacterium halodurans (strain ATCC BAA-125 / DSM 18197 / FERM 7344 / JCM 9153 / C-125) (Bacillus halodurans).